The sequence spans 141 residues: MIDERDKIILEILSKDARTPFTEIAKKLGISETAVRKRVKALEEKGIIEGYTIRINPKKLGYSLVTITGVDTRPEKLFEVAEKLKEFEFVRELYLSSGDHMIMAVIWARDGEDLADIISNKIGKIDGVTKVCPAIILEKLK.

The 62-residue stretch at 2-63 (IDERDKIILE…RINPKKLGYS (62 aa)) folds into the HTH asnC-type domain. The H-T-H motif DNA-binding region spans 21-40 (FTEIAKKLGISETAVRKRVK).

As to quaternary structure, homooctamer; tetramer of dimers.

In terms of biological role, DNA-binding protein that negatively regulates its own transcription. Interferes with RNA polymerase (RNAP) recruitment by inhibiting the association of RNAP with the TBP-TFB promoter complex. The sequence is that of HTH-type transcriptional regulator LrpA (lrpA) from Pyrococcus horikoshii (strain ATCC 700860 / DSM 12428 / JCM 9974 / NBRC 100139 / OT-3).